The sequence spans 1291 residues: DNA-directed RNA polymerase subunit beta (1291 aa).

Belongs to the RNA polymerase beta chain family. In terms of assembly, the RNAP catalytic core consists of 2 alpha, 1 beta, 1 beta' and 1 omega subunit. When a sigma factor is associated with the core the holoenzyme is formed, which can initiate transcription.

It carries out the reaction RNA(n) + a ribonucleoside 5'-triphosphate = RNA(n+1) + diphosphate. Its function is as follows. DNA-dependent RNA polymerase catalyzes the transcription of DNA into RNA using the four ribonucleoside triphosphates as substrates. This is DNA-directed RNA polymerase subunit beta from Cytophaga hutchinsonii (strain ATCC 33406 / DSM 1761 / CIP 103989 / NBRC 15051 / NCIMB 9469 / D465).